Here is a 434-residue protein sequence, read N- to C-terminus: Tol-Pal system protein TolB (434 aa).

An N-terminal signal peptide occupies residues 1 to 24; it reads MKFSAYLTTLFIVLFSLFIQTVQA.

Belongs to the TolB family. In terms of assembly, the Tol-Pal system is composed of five core proteins: the inner membrane proteins TolA, TolQ and TolR, the periplasmic protein TolB and the outer membrane protein Pal. They form a network linking the inner and outer membranes and the peptidoglycan layer.

It localises to the periplasm. In terms of biological role, part of the Tol-Pal system, which plays a role in outer membrane invagination during cell division and is important for maintaining outer membrane integrity. This is Tol-Pal system protein TolB from Histophilus somni (strain 2336) (Haemophilus somnus).